Here is a 102-residue protein sequence, read N- to C-terminus: Small ribosomal subunit protein uS10 (102 aa).

This sequence belongs to the universal ribosomal protein uS10 family. Part of the 30S ribosomal subunit.

Functionally, involved in the binding of tRNA to the ribosomes. The chain is Small ribosomal subunit protein uS10 from Macrococcus caseolyticus (strain JCSC5402) (Macrococcoides caseolyticum).